Here is a 295-residue protein sequence, read N- to C-terminus: MASLKDLKNRIGSVKSTQKITKAMQMVAAAKLRRAQEAAEAARPYAQRMAAVMANLSTAMSGTPGASPLLVGTGKSDAYLLVVMTADRGLCGGFNTNIVKKARERINALKAEGKDVKVICVGKKGADQLKRNFASLIVDKMELSGEKTITGATSVRIGDKIRHMFENGEFDVCELVSAEFVSVISQKPRAKVLIPAIDAIDEGVERPDLGGAVYDAEPDEETILNVLLPRYADTVILSALLENVAGEMGAKMAAMDNATRNAGELIDKLNLVYNRTRQAQITTELTEIISGAEAL.

This sequence belongs to the ATPase gamma chain family. In terms of assembly, F-type ATPases have 2 components, CF(1) - the catalytic core - and CF(0) - the membrane proton channel. CF(1) has five subunits: alpha(3), beta(3), gamma(1), delta(1), epsilon(1). CF(0) has three main subunits: a, b and c.

It is found in the cell inner membrane. Produces ATP from ADP in the presence of a proton gradient across the membrane. The gamma chain is believed to be important in regulating ATPase activity and the flow of protons through the CF(0) complex. The polypeptide is ATP synthase gamma chain (Maricaulis maris (strain MCS10) (Caulobacter maris)).